Here is a 356-residue protein sequence, read N- to C-terminus: Phospho-N-acetylmuramoyl-pentapeptide-transferase (356 aa).

The next 10 membrane-spanning stretches (helical) occupy residues 27-47 (ATLM…INML), 73-93 (TMGG…WMDL), 97-117 (FVWA…LDDL), 138-158 (FLVA…WLYV), 165-185 (AIPL…GAGN), 195-215 (GLAI…AYLA), 232-252 (AGEL…FLWF), 258-278 (AVFM…AIAV), 284-304 (IVLA…IIQV), and 333-353 (KVVI…LATL).

Belongs to the glycosyltransferase 4 family. MraY subfamily. It depends on Mg(2+) as a cofactor.

The protein localises to the cell inner membrane. The enzyme catalyses UDP-N-acetyl-alpha-D-muramoyl-L-alanyl-gamma-D-glutamyl-meso-2,6-diaminopimeloyl-D-alanyl-D-alanine + di-trans,octa-cis-undecaprenyl phosphate = di-trans,octa-cis-undecaprenyl diphospho-N-acetyl-alpha-D-muramoyl-L-alanyl-D-glutamyl-meso-2,6-diaminopimeloyl-D-alanyl-D-alanine + UMP. It participates in cell wall biogenesis; peptidoglycan biosynthesis. In terms of biological role, catalyzes the initial step of the lipid cycle reactions in the biosynthesis of the cell wall peptidoglycan: transfers peptidoglycan precursor phospho-MurNAc-pentapeptide from UDP-MurNAc-pentapeptide onto the lipid carrier undecaprenyl phosphate, yielding undecaprenyl-pyrophosphoryl-MurNAc-pentapeptide, known as lipid I. In Erythrobacter litoralis (strain HTCC2594), this protein is Phospho-N-acetylmuramoyl-pentapeptide-transferase.